Here is a 150-residue protein sequence, read N- to C-terminus: Large ribosomal subunit protein uL15 (150 aa).

The disordered stretch occupies residues 1 to 55 (MADNEILQMHDLKPAPGAKKDRTRVGRGEGSKGKTSGRGAKGQTKRNHVRPGFEG). A compositionally biased stretch (basic and acidic residues) spans 8–32 (QMHDLKPAPGAKKDRTRVGRGEGSK).

Belongs to the universal ribosomal protein uL15 family. Part of the 50S ribosomal subunit.

Binds to the 23S rRNA. This chain is Large ribosomal subunit protein uL15, found in Bifidobacterium longum (strain NCC 2705).